We begin with the raw amino-acid sequence, 397 residues long: tRNA-specific 2-thiouridylase MnmA (397 aa).

ATP-binding positions include 19–26 (AMSGGVDS) and L45. The active-site Nucleophile is the C113. A disulfide bond links C113 and C210. G137 serves as a coordination point for ATP. Residues 160–162 (RDQ) form an interaction with tRNA region. The active-site Cysteine persulfide intermediate is the C210.

This sequence belongs to the MnmA/TRMU family.

It localises to the cytoplasm. It catalyses the reaction S-sulfanyl-L-cysteinyl-[protein] + uridine(34) in tRNA + AH2 + ATP = 2-thiouridine(34) in tRNA + L-cysteinyl-[protein] + A + AMP + diphosphate + H(+). Its function is as follows. Catalyzes the 2-thiolation of uridine at the wobble position (U34) of tRNA, leading to the formation of s(2)U34. The sequence is that of tRNA-specific 2-thiouridylase MnmA from Bradyrhizobium sp. (strain BTAi1 / ATCC BAA-1182).